The primary structure comprises 329 residues: D-alanine--D-alanine ligase (329 aa).

One can recognise an ATP-grasp domain in the interval 120–326 (KLWLSAIGIP…FADYLEQILR (207 aa)). ATP is bound at residue 150-205 (ALAKWGKVFIKAASQGSSVGCYSASNEADLVKGIADAFGYSEQVLIEKAVKPRELE). Mg(2+)-binding residues include aspartate 280, glutamate 293, and asparagine 295.

This sequence belongs to the D-alanine--D-alanine ligase family. Mg(2+) serves as cofactor. The cofactor is Mn(2+).

It localises to the cytoplasm. The enzyme catalyses 2 D-alanine + ATP = D-alanyl-D-alanine + ADP + phosphate + H(+). It participates in cell wall biogenesis; peptidoglycan biosynthesis. Cell wall formation. The polypeptide is D-alanine--D-alanine ligase (Aeromonas hydrophila subsp. hydrophila (strain ATCC 7966 / DSM 30187 / BCRC 13018 / CCUG 14551 / JCM 1027 / KCTC 2358 / NCIMB 9240 / NCTC 8049)).